The sequence spans 129 residues: Small ribosomal subunit protein uS12 (129 aa).

Asp89 carries the post-translational modification 3-methylthioaspartic acid. A disordered region spans residues 101–129; the sequence is TLDTSGVSDRKQSRSKYGAKQPKAVAAKK.

Belongs to the universal ribosomal protein uS12 family. In terms of assembly, part of the 30S ribosomal subunit. Contacts proteins S8 and S17. May interact with IF1 in the 30S initiation complex.

Functionally, with S4 and S5 plays an important role in translational accuracy. Interacts with and stabilizes bases of the 16S rRNA that are involved in tRNA selection in the A site and with the mRNA backbone. Located at the interface of the 30S and 50S subunits, it traverses the body of the 30S subunit contacting proteins on the other side and probably holding the rRNA structure together. The combined cluster of proteins S8, S12 and S17 appears to hold together the shoulder and platform of the 30S subunit. The protein is Small ribosomal subunit protein uS12 of Chlorobium luteolum (strain DSM 273 / BCRC 81028 / 2530) (Pelodictyon luteolum).